Here is a 461-residue protein sequence, read N- to C-terminus: Probable Xaa-Pro aminopeptidase PEPP (461 aa).

Residues Asp257, Asp268, Glu391, and Glu431 each coordinate Mn(2+).

This sequence belongs to the peptidase M24B family. Mn(2+) is required as a cofactor.

It carries out the reaction Release of any N-terminal amino acid, including proline, that is linked to proline, even from a dipeptide or tripeptide.. Its function is as follows. Catalyzes the removal of a penultimate prolyl residue from the N-termini of peptides. The polypeptide is Probable Xaa-Pro aminopeptidase PEPP (PEPP) (Colletotrichum graminicola (strain M1.001 / M2 / FGSC 10212) (Maize anthracnose fungus)).